The following is a 150-amino-acid chain: Transcriptional repressor NrdR (150 aa).

Residues 3-34 (CPFCGYEDTFVIDTREIEDQRVIRRRRECPNC) fold into a zinc finger. An ATP-cone domain is found at 49–139 (IMVIKKDGRR…VYQEFSSLEE (91 aa)).

It belongs to the NrdR family. The cofactor is Zn(2+).

Its function is as follows. Negatively regulates transcription of bacterial ribonucleotide reductase nrd genes and operons by binding to NrdR-boxes. The polypeptide is Transcriptional repressor NrdR (Dictyoglomus thermophilum (strain ATCC 35947 / DSM 3960 / H-6-12)).